Here is a 185-residue protein sequence, read N- to C-terminus: Ribosome-recycling factor (185 aa).

It belongs to the RRF family.

The protein resides in the cytoplasm. Its function is as follows. Responsible for the release of ribosomes from messenger RNA at the termination of protein biosynthesis. May increase the efficiency of translation by recycling ribosomes from one round of translation to another. This is Ribosome-recycling factor from Bacillus cereus (strain G9842).